The primary structure comprises 754 residues: Nibrin (754 aa).

In terms of domain architecture, FHA spans 24 to 83 (YVVGRKNCAILIENDQSISRNHAVLTANFSVTNLSQTDEIPVLTLKDNSKYGTFVNEEKM). BRCT domains lie at 105–181 (KFRI…TEFL) and 224–315 (GKTF…LAVI). The segment at 111–328 (EPLVACSSCL…TKNYCDPQGH (218 aa)) is mediates interaction with SP100. Residues 221 to 402 (IFKGKTFIFL…FRMLSQDAPT (182 aa)) are interaction with MTOR, MAPKAP1 and RICTOR. S278 carries the phosphoserine; by ATM modification. The disordered stretch occupies residues 326-346 (QGHPSTGLKTTTPGPSLSQGV). Positions 328–346 (HPSTGLKTTTPGPSLSQGV) are enriched in polar residues. Position 337 is a phosphothreonine (T337). S343 carries the post-translational modification Phosphoserine; by ATM. S347 carries the phosphoserine modification. K388 is subject to N6-lactoyllysine. 2 disordered regions span residues 396-415 (LSQD…NNNS) and 430-478 (QLSP…MSSC). A Phosphoserine modification is found at S397. T402 carries the phosphothreonine modification. 2 stretches are compositionally biased toward polar residues: residues 430 to 440 (QLSPTKLPSIN) and 447 to 462 (SQQQ…FQPS). Position 432 is a phosphoserine; by CDK2 (S432). Residue K435 forms a Glycyl lysine isopeptide (Lys-Gly) (interchain with G-Cter in ubiquitin) linkage. The Nuclear localization signal signature appears at 461-467 (PSTKKRE). 2 positions are modified to phosphoserine: S509 and S518. Residues K529, K571, and K582 each participate in a glycyl lysine isopeptide (Lys-Gly) (interchain with G-Cter in SUMO2) cross-link. Phosphoserine occurs at positions 615 and 673. Glycyl lysine isopeptide (Lys-Gly) (interchain with G-Cter in ubiquitin) cross-links involve residues K686, K690, and K735. Positions 740–749 (ADDLFRYNPY) match the FxF/Y motif motif.

It belongs to the Nibrin family. Component of the MRN complex composed of two heterodimers RAD50 and MRE11 associated with a single NBN. The MRN complexes dimerize on DNA to form joined MRN-MRN oligomers required for DNA double-strand break repair. As part of the MRN complex, interacts with MCM9; the interaction recruits the complex to DNA repair sites. Component of the BASC complex, at least composed of BRCA1, MSH2, MSH6, MLH1, ATM, BLM, RAD50, MRE11 and NBN. Interacts with histone H2AX; this requires phosphorylation of H2AX on 'Ser-139' and promotes NBN recruitment to DNA damage sites. Interacts with (phosphorylated) MDC1; promoting NBN recruitment to DNA damage sites. Interacts with (phosphorylated) RAD17; promoting NBN recruitment to DNA damage sites. Interacts (via FxF/Y motif) with ATM. Interacts with HJURP. Interacts with INTS3. Interacts with KPNA2. Interacts with TERF2; interaction is disrupted upon NBN phosphorylation by CDK2. Interacts with (phosphorylated) RBBP8/CtIP; the interaction links the role of the MRN complex in DNA double-strand break sensing to resection. Interacts with SP100; recruits NBN to PML bodies. Interacts with ATF2. Interacts with MTOR, MAPKAP1 isoform 2 and RICTOR; indicative for an association with the mTORC2 complex. Interacts with MRNIP. Interacts with UFL1; promoting UFL1 recruitment to double-strand breaks following DNA damage. Interacts with CYREN (via XLF motif). In terms of assembly, (Microbial infection) Interacts with herpes simplex virus 1 protein UL12. In terms of processing, phosphorylated by ATM in response of ionizing radiation, and such phosphorylation is responsible intra-S phase checkpoint control and telomere maintenance. Phosphorylated at Ser-432 by CDK2 in S/G2 phases abolishes interaction with TERF2, enabling DCLRE1B/Apollo recruitment to telomeres. Phosphorylation at Ser-432 in response to dysfunctional telomeres promotes non-homologous end joining repair at telomeres, while dephosphorylation by PPP1CA promotes microhomology-mediated end-joining (MMEJ) repair. Ubiquitinated at Lys-435 via 'Lys-6'-linked ubiquitin chains by RNF8, promoting NBN recruitment to DNA double-strand breaks (DSBs). Ubiquitinated at Lys-686 and Lys-689 via 'Lys-63'-linked ubiquitin chains by PELI1: ubiquitination takes place following PELI1 phosphorylation and promotes ATM activation and DNA repair. Ubiquitinated at Lys-735 via 'Lys-63'-linked ubiquitin chains by the SCF(SKP2) complex: ubiquitination takes place following SKP2 phosphorylation and promotes ATM activation and DNA repair. Post-translationally, lactylation at Lys-388 by KAT5 in response to DNA damage promotes recruitment of the MRN complex to DNA damage sites. Delactylated by HDAC3. As to expression, ubiquitous. Expressed at high levels in testis.

It is found in the nucleus. The protein resides in the chromosome. Its subcellular location is the PML body. It localises to the telomere. Its function is as follows. Component of the MRN complex, which plays a central role in double-strand break (DSB) repair, DNA recombination, maintenance of telomere integrity and meiosis. The MRN complex is involved in the repair of DNA double-strand breaks (DSBs) via homologous recombination (HR), an error-free mechanism which primarily occurs during S and G2 phases. The complex (1) mediates the end resection of damaged DNA, which generates proper single-stranded DNA, a key initial steps in HR, and is (2) required for the recruitment of other repair factors and efficient activation of ATM and ATR upon DNA damage. The MRN complex possesses single-strand endonuclease activity and double-strand-specific 3'-5' exonuclease activity, which are provided by MRE11, to initiate end resection, which is required for single-strand invasion and recombination. Within the MRN complex, NBN acts as a protein-protein adapter, which specifically recognizes and binds phosphorylated proteins, promoting their recruitment to DNA damage sites. Recruits MRE11 and RAD50 components of the MRN complex to DSBs in response to DNA damage. Promotes the recruitment of PI3/PI4-kinase family members ATM, ATR, and probably DNA-PKcs to the DNA damage sites, activating their functions. Mediates the recruitment of phosphorylated RBBP8/CtIP to DSBs, leading to cooperation between the MRN complex and RBBP8/CtIP to initiate end resection. RBBP8/CtIP specifically promotes the endonuclease activity of the MRN complex to clear DNA ends containing protein adducts. The MRN complex is also required for the processing of R-loops. NBN also functions in telomere length maintenance via its interaction with TERF2: interaction with TERF2 during G1 phase preventing recruitment of DCLRE1B/Apollo to telomeres. NBN also promotes DNA repair choice at dysfunctional telomeres: NBN phosphorylation by CDK2 promotes non-homologous end joining repair at telomeres, while unphosphorylated NBN promotes microhomology-mediated end-joining (MMEJ) repair. Enhances AKT1 phosphorylation possibly by association with the mTORC2 complex. This is Nibrin from Homo sapiens (Human).